A 754-amino-acid polypeptide reads, in one-letter code: 5-methyltetrahydropteroyltriglutamate--homocysteine methyltransferase (754 aa).

Residues 19–22 (RELK) and K121 each bind 5-methyltetrahydropteroyltri-L-glutamate. L-homocysteine-binding positions include 423 to 425 (IGS) and E476. L-methionine is bound by residues 423-425 (IGS) and E476. 5-methyltetrahydropteroyltri-L-glutamate-binding positions include 507–508 (RC) and W553. D591 lines the L-homocysteine pocket. D591 contacts L-methionine. Residue E597 coordinates 5-methyltetrahydropteroyltri-L-glutamate. Zn(2+) contacts are provided by H633, C635, and E657. Residue H686 is the Proton donor of the active site. C718 is a Zn(2+) binding site.

This sequence belongs to the vitamin-B12 independent methionine synthase family. Requires Zn(2+) as cofactor.

It carries out the reaction 5-methyltetrahydropteroyltri-L-glutamate + L-homocysteine = tetrahydropteroyltri-L-glutamate + L-methionine. The protein operates within amino-acid biosynthesis; L-methionine biosynthesis via de novo pathway; L-methionine from L-homocysteine (MetE route): step 1/1. In terms of biological role, catalyzes the transfer of a methyl group from 5-methyltetrahydrofolate to homocysteine resulting in methionine formation. This chain is 5-methyltetrahydropteroyltriglutamate--homocysteine methyltransferase, found in Corynebacterium efficiens (strain DSM 44549 / YS-314 / AJ 12310 / JCM 11189 / NBRC 100395).